A 29-amino-acid chain; its full sequence is Cyclotide mden-C (29 aa).

Positions 1-29 (GKPICGETCFKGKCYTPGCTCSYPVCKKN) form a cross-link, cyclopeptide (Gly-Asn). Intrachain disulfides connect C5–C19, C9–C21, and C14–C26.

The protein belongs to the cyclotide family. This is a cyclic peptide.

Functionally, probably participates in a plant defense mechanism. The sequence is that of Cyclotide mden-C from Melicytus dentatus (Tree violet).